The primary structure comprises 40 residues: Protein P4 (40 aa).

A helical membrane pass occupies residues 10-29; it reads KYFAYGVAISAAGAILAEYV.

It localises to the virion membrane. May interact with the viral DNA. This is Protein P4 (IV) from Pseudoalteromonas phage PM2 (Bacteriophage PM2).